Consider the following 211-residue polypeptide: Pyridoxine/pyridoxamine 5'-phosphate oxidase (211 aa).

Residues 7 to 10 and lysine 65 each bind substrate; that span reads RREY. FMN-binding positions include 60 to 65, 75 to 76, arginine 81, lysine 82, and glutamine 104; these read RTVLLK and YT. Residues tyrosine 122, arginine 126, and serine 130 each coordinate substrate. FMN contacts are provided by residues 139 to 140 and tryptophan 184; that span reads QS. Residue 190 to 192 coordinates substrate; sequence RLH. Arginine 194 contacts FMN.

Belongs to the pyridoxamine 5'-phosphate oxidase family. As to quaternary structure, homodimer. FMN is required as a cofactor.

The enzyme catalyses pyridoxamine 5'-phosphate + O2 + H2O = pyridoxal 5'-phosphate + H2O2 + NH4(+). The catalysed reaction is pyridoxine 5'-phosphate + O2 = pyridoxal 5'-phosphate + H2O2. It participates in cofactor metabolism; pyridoxal 5'-phosphate salvage; pyridoxal 5'-phosphate from pyridoxamine 5'-phosphate: step 1/1. The protein operates within cofactor metabolism; pyridoxal 5'-phosphate salvage; pyridoxal 5'-phosphate from pyridoxine 5'-phosphate: step 1/1. Functionally, catalyzes the oxidation of either pyridoxine 5'-phosphate (PNP) or pyridoxamine 5'-phosphate (PMP) into pyridoxal 5'-phosphate (PLP). The protein is Pyridoxine/pyridoxamine 5'-phosphate oxidase of Aeromonas hydrophila subsp. hydrophila (strain ATCC 7966 / DSM 30187 / BCRC 13018 / CCUG 14551 / JCM 1027 / KCTC 2358 / NCIMB 9240 / NCTC 8049).